Reading from the N-terminus, the 89-residue chain is Small ribosomal subunit protein uS19 (89 aa).

Belongs to the universal ribosomal protein uS19 family.

Its function is as follows. Protein S19 forms a complex with S13 that binds strongly to the 16S ribosomal RNA. The protein is Small ribosomal subunit protein uS19 of Xanthomonas campestris pv. campestris (strain 8004).